The chain runs to 323 residues: Acetyl esterase (323 aa).

Residues 91–93 (HGG) carry the Involved in the stabilization of the negatively charged intermediate by the formation of the oxyanion hole motif. Catalysis depends on residues S165, D262, and H292.

This sequence belongs to the 'GDXG' lipolytic enzyme family. In terms of assembly, homodimer. Interacts with MalT and MelA.

The protein localises to the cytoplasm. Its function is as follows. Displays esterase activity towards short chain fatty esters (acyl chain length of up to 8 carbons). Able to hydrolyze triacetylglycerol (triacetin) and tributyrylglycerol (tributyrin), but not trioleylglycerol (triolein) or cholesterol oleate. Negatively regulates MalT activity by antagonizing maltotriose binding. Inhibits MelA galactosidase activity. In Salmonella dublin (strain CT_02021853), this protein is Acetyl esterase.